Here is a 276-residue protein sequence, read N- to C-terminus: Anamorsin homolog (276 aa).

The tract at residues 1–152 (MEPYVVDNLN…TRGSSIKLPW (152 aa)) is N-terminal SAM-like domain. The tract at residues 152–189 (WAHSDIEAAWENVDNETSYDVDKNLINTNSLLQKSDYV) is linker. Residues C195, C211, C214, and C216 each contribute to the [2Fe-2S] cluster site. The segment at 195–216 (CGQEFAKNSIGKRKRACKNCTC) is fe-S binding site A. [4Fe-4S] cluster contacts are provided by C237, C240, C248, and C251. 2 consecutive short sequence motifs (cx2C motif) follow at residues 237–240 (CGNC) and 248–251 (CSTC). Positions 237–251 (CGNCYLGDAFRCSTC) are fe-S binding site B.

The protein belongs to the anamorsin family. In terms of assembly, monomer. [2Fe-2S] cluster serves as cofactor. Requires [4Fe-4S] cluster as cofactor.

The protein resides in the cytoplasm. It is found in the mitochondrion intermembrane space. In terms of biological role, component of the cytosolic iron-sulfur (Fe-S) protein assembly (CIA) machinery. Required for the maturation of extramitochondrial Fe-S proteins. Part of an electron transfer chain functioning in an early step of cytosolic Fe-S biogenesis, facilitating the de novo assembly of a [4Fe-4S] cluster on the cytosolic Fe-S scaffold complex. Electrons are transferred from NADPH via a FAD- and FMN-containing diflavin oxidoreductase. Together with the diflavin oxidoreductase, also required for the assembly of the diferric tyrosyl radical cofactor of ribonucleotide reductase (RNR), probably by providing electrons for reduction during radical cofactor maturation in the catalytic small subunit. This is Anamorsin homolog from Schistosoma japonicum (Blood fluke).